The chain runs to 301 residues: Very-long-chain aldehyde decarbonylase GL1-10 (301 aa).

The next 3 membrane-spanning stretches (helical) occupy residues 36-56, 94-114, and 187-207; these read VLFWHNILFLFVVFTLAPLPV, FFLVIGPLQLVSYPTVKMVGI, and SFVGPALAPGHMITFWLWIVL. The Fatty acid hydroxylase domain occupies 131-265; sequence LVYFLVEDYL…FTYCDYLYGT (135 aa).

The protein belongs to the sterol desaturase family. As to quaternary structure, homodimer. In terms of tissue distribution, expressed ubiquitously.

It localises to the endoplasmic reticulum membrane. It catalyses the reaction a long-chain fatty aldehyde + 2 NADPH + O2 + H(+) = a long-chain alkane + formate + 2 NADP(+) + H2O. In terms of biological role, aldehyde decarbonylase involved in the conversion of aldehydes to alkanes. Core component of a very-long-chain alkane synthesis complex. This is Very-long-chain aldehyde decarbonylase GL1-10 from Oryza sativa subsp. japonica (Rice).